A 57-amino-acid polypeptide reads, in one-letter code: Small ribosomal subunit protein bS21 (57 aa).

It belongs to the bacterial ribosomal protein bS21 family.

This is Small ribosomal subunit protein bS21 from Geobacillus kaustophilus (strain HTA426).